Consider the following 772-residue polypeptide: Protocadherin beta-6 (772 aa).

The N-terminal stretch at 1 to 28 (METTLAKTPEKRQVVFLAILLLLWEAGS) is a signal peptide. Cadherin domains follow at residues 31 to 133 (IRYS…SPEF), 134 to 242 (PDTE…APEF), 243 to 346 (VQSL…APKL), 347 to 450 (TISS…APAF), and 451 to 560 (TQTS…APFI). The Extracellular portion of the chain corresponds to 31-690 (IRYSIPEETE…QDEDMLTLYL (660 aa)). Cys96 and Cys102 are joined by a disulfide. N-linked (GlcNAc...) asparagine glycosylation occurs at Asn169. The O-linked (Man) serine glycan is linked to Ser223. Thr225 carries O-linked (Man) threonine glycosylation. Residue Asn417 is glycosylated (N-linked (GlcNAc...) asparagine). Residue Asn566 is glycosylated (N-linked (GlcNAc...) asparagine). Positions 575 to 675 (LPRAAEPGYL…SQPYLPLPEV (101 aa)) constitute a Cadherin 6 domain. The chain crosses the membrane as a helical span at residues 691-711 (VIALASVSSLFLLSVLLFVGV). The Cytoplasmic portion of the chain corresponds to 712–772 (RLCRRVREAS…DFKFLNHYSQ (61 aa)).

As to quaternary structure, forms homodimers in trans (molecules expressed by two different cells). Forms promiscuous heterodimers in cis (at the plasma membrane of the same cell) with other protocadherins.

It localises to the cell membrane. In terms of biological role, calcium-dependent cell-adhesion protein involved in cells self-recognition and non-self discrimination. Thereby, it is involved in the establishment and maintenance of specific neuronal connections in the brain. The chain is Protocadherin beta-6 from Mus musculus (Mouse).